The primary structure comprises 634 residues: DNA gyrase subunit B (634 aa).

Residues 1 to 220 (MSYDASAIRV…EEVFLDKGGV (220 aa)) are ATPase domain. A transducer domain region spans residues 221–390 (ASFAKALAEG…EAARKARELV (170 aa)). One can recognise a Toprim domain in the interval 416-534 (AELFIVEGDS…RGHVYIAQPP (119 aa)). Mg(2+)-binding residues include glutamate 422, aspartate 499, and aspartate 501.

This sequence belongs to the type II topoisomerase GyrB family. As to quaternary structure, heterotetramer, composed of two GyrA and two GyrB chains. Non-hydrolyzable ATP analogs induce dimerization, novobiocin also induces a small amount of dimerization. The two subunits form an intertwined dimer where the GyrB ATPase transducer helix of 1 subunit connects to the Toprim domain of the other GyrB subunit through a 10 residue linker. In the heterotetramer, GyrA contains the active site tyrosine that forms a covalent intermediate with the DNA, while GyrB binds cofactors and catalyzes ATP hydrolysis. Mg(2+) is required as a cofactor. Requires Mn(2+) as cofactor. The cofactor is Ca(2+).

Its subcellular location is the cytoplasm. It catalyses the reaction ATP-dependent breakage, passage and rejoining of double-stranded DNA.. A type II topoisomerase that negatively supercoils closed circular double-stranded (ds) DNA in an ATP-dependent manner. It probably also catalyzes the interconversion of other topological isomers of double-stranded DNA rings, including catenanes. Relaxes negatively supercoiled DNA in an ATP-independent manner. At comparable concentrations T.thermophilus gyrase does not introduce as many negative supercoils into DNA as the E.coli enzyme. Functionally, negative supercoiling favors strand separation, and DNA replication, transcription, recombination and repair, all of which involve strand separation. Type II topoisomerases break and join 2 DNA strands simultaneously in an ATP-dependent manner. This chain is DNA gyrase subunit B, found in Thermus thermophilus (strain ATCC 27634 / DSM 579 / HB8).